We begin with the raw amino-acid sequence, 295 residues long: Ubiquitin-conjugating enzyme E2-34 kDa (295 aa).

One can recognise a UBC core domain in the interval T7–Q169. Residue C95 is the Glycyl thioester intermediate of the active site. Residues I185–I295 form a disordered region. At S186 the chain carries Phosphoserine. The span at K189–A200 shows a compositional bias: basic and acidic residues. Acidic residues-rich tracts occupy residues S207–D226 and E234–D265. Positions V269–E279 are enriched in basic and acidic residues. A phosphoserine mark is found at S282 and S292.

This sequence belongs to the ubiquitin-conjugating enzyme family. Interacts with CDC53. Component of the E3 ubiquitin ligase complexes SCF with CDC53, SKP1/CBF3D, HRT1 and some F-box proteins like MET30 and CDC4.

Its subcellular location is the cytoplasm. The protein resides in the nucleus. It catalyses the reaction S-ubiquitinyl-[E1 ubiquitin-activating enzyme]-L-cysteine + [E2 ubiquitin-conjugating enzyme]-L-cysteine = [E1 ubiquitin-activating enzyme]-L-cysteine + S-ubiquitinyl-[E2 ubiquitin-conjugating enzyme]-L-cysteine.. It functions in the pathway protein modification; protein ubiquitination. Functionally, catalyzes the covalent attachment of ubiquitin to other proteins. Capable, in vitro, to ubiquitinate histone H2A. Mediates the initiation of DNA replication (transition of G1 to S phase in cell cycle). Essential component of the E3 ubiquitin ligase complex SCF (SKP1-CUL1-F-box protein), which mediates the ubiquitination and subsequent proteasomal degradation of target proteins. Involved in the regulation of methionine biosynthesis genes and in the degradation of CDC6 together with CDC4 and CDC53. The chain is Ubiquitin-conjugating enzyme E2-34 kDa (CDC34) from Saccharomyces cerevisiae (strain ATCC 204508 / S288c) (Baker's yeast).